The following is a 283-amino-acid chain: 1-deoxypentalenic acid 11-beta-hydroxylase (283 aa).

Arg117 serves as a coordination point for substrate. Positions 135 and 137 each coordinate Fe cation. Residues 135 to 137 and Trp151 contribute to the 2-oxoglutarate site; that span reads HQD. Position 186 (Arg186) interacts with substrate. His224 contributes to the Fe cation binding site. 2-oxoglutarate-binding residues include Ser226 and Arg238. The segment at 260 to 283 is disordered; sequence WPESAKDASKGILSKITGTPTTAE.

This sequence belongs to the PhyH family. The cofactor is Fe cation. L-ascorbate is required as a cofactor.

The enzyme catalyses 1-deoxypentalenate + 2-oxoglutarate + O2 = 1-deoxy-11beta-hydroxypentalenate + succinate + CO2. Its pathway is antibiotic biosynthesis; pentalenolactone biosynthesis. In terms of biological role, catalyzes the conversion of 1-deoxypentalenic acid to 11-beta-hydroxy-1-deoxypentalenic acid in the biosynthesis of pentalenolactone antibiotic. This is 1-deoxypentalenic acid 11-beta-hydroxylase (penH) from Streptomyces exfoliatus (Streptomyces hydrogenans).